The chain runs to 102 residues: Urease subunit beta (102 aa).

It belongs to the urease beta subunit family. As to quaternary structure, heterotrimer of UreA (gamma), UreB (beta) and UreC (alpha) subunits. Three heterotrimers associate to form the active enzyme.

The protein localises to the cytoplasm. The enzyme catalyses urea + 2 H2O + H(+) = hydrogencarbonate + 2 NH4(+). It functions in the pathway nitrogen metabolism; urea degradation; CO(2) and NH(3) from urea (urease route): step 1/1. This Trichodesmium erythraeum (strain IMS101) protein is Urease subunit beta.